The following is a 66-amino-acid chain: COP-associated protein (66 aa).

Positions 1–66 (MKIDIPVKGM…AILDAGYELG (66 aa)) constitute an HMA domain. Cu cation contacts are provided by cysteine 12 and cysteine 15.

Its function is as follows. Part of a cation-transporting system which is associated with copper export out of the H.pylori cells. The sequence is that of COP-associated protein (copP) from Helicobacter felis (strain ATCC 49179 / CCUG 28539 / NCTC 12436 / CS1).